The following is a 233-amino-acid chain: MIKAVLFDVDDTLYPSSKLAEEARRNAIRAMIEAGLETDLSEEELYRELQEVVKEYGSNHPRHFDLLLRRIGADPEPKLVAAAVVAYHDTKFAYLKPYPDVIPTLMQLREMGFKLGAVTSGLAVKQWEKLIRLGIHHFFHEVVISEEIGVEKPNPKIFIEAARRLGVKPEEAVYVGDRLDKDIRGANRAGMVTVRIRRGKYQDMEPRNDDDVPDFEIDRPRELLDVVRELAKD.

This sequence belongs to the HAD-like hydrolase superfamily. It depends on Mg(2+) as a cofactor.

Functionally, catalyzes the dephosphorylation of D,L-glyceraldehyde 3-phosphate in vitro. The chain is Glyceraldehyde 3-phosphate phosphatase from Methanopyrus kandleri (strain AV19 / DSM 6324 / JCM 9639 / NBRC 100938).